The following is a 324-amino-acid chain: Viral cathepsin (324 aa).

The first 18 residues, 1-18 (MNKIVLYLLIYVGTFSAA), serve as a signal peptide directing secretion. The propeptide at 19–113 (YDLLKAPSYF…VVLNRPPDKG (95 aa)) is activation peptide. 3 disulfide bridges follow: Cys134/Cys175, Cys168/Cys208, and Cys263/Cys311. The active site involves Cys137. N-linked (GlcNAc...) asparagine; by host glycosylation occurs at Asn159. Catalysis depends on residues His270 and Asn290.

It belongs to the peptidase C1 family. Post-translationally, synthesized as an inactive proenzyme and activated by proteolytic removal of the inhibitory propeptide.

It carries out the reaction Endopeptidase of broad specificity, hydrolyzing substrates of both cathepsin L and cathepsin B.. Functionally, cysteine protease that plays an essential role in host liquefaction to facilitate horizontal transmission of the virus. May participate in the degradation of foreign protein expressed by the baculovirus system. This is Viral cathepsin (Vcath) from Choristoneura fumiferana defective polyhedrosis virus (Cfdef).